A 405-amino-acid polypeptide reads, in one-letter code: Probable tRNA sulfurtransferase (405 aa).

Positions 60-165 constitute a THUMP domain; the sequence is TAVMDRLKGV…LNGVFLSGQT (106 aa). ATP contacts are provided by residues 183–184, 208–209, R265, G287, and Q296; these read ML and HF.

It belongs to the ThiI family.

Its subcellular location is the cytoplasm. The enzyme catalyses [ThiI sulfur-carrier protein]-S-sulfanyl-L-cysteine + a uridine in tRNA + 2 reduced [2Fe-2S]-[ferredoxin] + ATP + H(+) = [ThiI sulfur-carrier protein]-L-cysteine + a 4-thiouridine in tRNA + 2 oxidized [2Fe-2S]-[ferredoxin] + AMP + diphosphate. It carries out the reaction [ThiS sulfur-carrier protein]-C-terminal Gly-Gly-AMP + S-sulfanyl-L-cysteinyl-[cysteine desulfurase] + AH2 = [ThiS sulfur-carrier protein]-C-terminal-Gly-aminoethanethioate + L-cysteinyl-[cysteine desulfurase] + A + AMP + 2 H(+). It participates in cofactor biosynthesis; thiamine diphosphate biosynthesis. In terms of biological role, catalyzes the ATP-dependent transfer of a sulfur to tRNA to produce 4-thiouridine in position 8 of tRNAs, which functions as a near-UV photosensor. Also catalyzes the transfer of sulfur to the sulfur carrier protein ThiS, forming ThiS-thiocarboxylate. This is a step in the synthesis of thiazole, in the thiamine biosynthesis pathway. The sulfur is donated as persulfide by IscS. This Levilactobacillus brevis (strain ATCC 367 / BCRC 12310 / CIP 105137 / JCM 1170 / LMG 11437 / NCIMB 947 / NCTC 947) (Lactobacillus brevis) protein is Probable tRNA sulfurtransferase.